The sequence spans 335 residues: UPF0353 protein MLBr01808 (335 aa).

The next 2 membrane-spanning stretches (helical) occupy residues tryptophan 18–valine 38 and valine 67–threonine 87. The VWFA domain maps to valine 98–leucine 294. The chain crosses the membrane as a helical span at residues alanine 309–isoleucine 329.

This sequence belongs to the UPF0353 family.

Its subcellular location is the cell membrane. The protein is UPF0353 protein MLBr01808 of Mycobacterium leprae (strain Br4923).